Reading from the N-terminus, the 78-residue chain is Transmembrane protein 258 (78 aa).

Residues 1–18 lie on the Cytoplasmic side of the membrane; sequence MDVMQRYVSPVNPAVFPH. Residues 19–39 traverse the membrane as a helical segment; that stretch reads LATVLLVIGTFFTAWFFIFVV. Over 40–53 the chain is Cytoplasmic; sequence SRKSSKESTLIKEL. Residues 54 to 74 traverse the membrane as a helical segment; it reads LISLCASIFLGFGIVFLLLTV. Over 75 to 78 the chain is Perinuclear space; sequence GIYV.

Belongs to the OST5 family. As to quaternary structure, homodimer. Component of the oligosaccharyltransferase (OST) complex. Interacts with klar and Msp300, components of LINC complex.

The protein localises to the nucleus outer membrane. It is found in the cytoplasm. The protein resides in the endoplasmic reticulum membrane. Its function is as follows. Subunit of the oligosaccharyl transferase (OST) complex that catalyzes the initial transfer of a defined glycan (Glc(3)Man(9)GlcNAc(2) in eukaryotes) from the lipid carrier dolichol-pyrophosphate to an asparagine residue within an Asn-X-Ser/Thr consensus motif in nascent polypeptide chains, the first step in protein N-glycosylation. N-glycosylation occurs cotranslationally and the complex associates with the Sec61 complex at the channel-forming translocon complex that mediates protein translocation across the endoplasmic reticulum (ER). All subunits are required for a maximal enzyme activity. In addition may regulates nuclear envelope (NE) architecture and nuclear positioning through the linker of nucleoskeleton and cytoskeleton (LINC)-dependent and -independent mechanisms. The chain is Transmembrane protein 258 from Drosophila melanogaster (Fruit fly).